Consider the following 507-residue polypeptide: Myocyte-specific enhancer factor 2D (507 aa).

Residues R3 to Y57 form the MADS-box domain. A DNA-binding region (mef2-type) is located at residues A58–E86. 5 positions are modified to phosphoserine: S98, S106, S110, S121, and S180. Residues T174 to G207 are disordered. A compositionally biased stretch (polar residues) spans S180–S192. S190 bears the Phosphoserine; by PKA mark. S231 carries the post-translational modification Phosphoserine. 3 disordered regions span residues N244–K267, W357–H392, and S423–K507. Residue K245 is modified to N6-acetyllysine. A Phosphoserine modification is found at S251. The segment covering P363–Q389 has biased composition (pro residues). K425 carries the post-translational modification N6-acetyllysine; alternate. K425 is covalently cross-linked (Glycyl lysine isopeptide (Lys-Gly) (interchain with G-Cter in SUMO); alternate). S430 carries the phosphoserine modification.

As to quaternary structure, forms a complex with class II HDACs in undifferentiating cells. On myogenic differentiation, HDACs are released into the cytoplasm allowing MEF2s to interact with other proteins for activation. Interacts with HDAC4 (in undifferentiating cells); the interaction translocates MEF2D to nuclear dots. Forms a heterodimer with MEF2A. Interacts with MAPK7; the interaction phosphorylates but does not activate MEF2D. Interacts with MYOG. Interacts with CCAR2 and HDAC3. In terms of processing, phosphorylated on Ser-430 by CDK5 is required for Lys-425 sumoylation and inhibits transcriptional activity. In neurons, enhanced CDK5 activity induced by neurotoxins promotes caspase 3-mediated cleavage leading to neuron apoptosis. Phosphorylation on Ser-180 can be enhanced by EGF. Phosphorylated and activated by CaMK4. Acetylated on Lys-425 by CREBBP. Acetylated by EP300. Deacetylated by SIRT1 and HDAC3. Post-translationally, sumoylated on Lys-425 with SUMO2 but not SUMO1; which inhibits transcriptional activity and myogenic activity. Desumoylated by SENP3.

The protein localises to the nucleus. Functionally, transcriptional activator which binds specifically to the MEF2 element, 5'-YTA[AT](4)TAR-3', found in numerous muscle-specific, growth factor- and stress-induced genes. Mediates cellular functions not only in skeletal and cardiac muscle development, but also in neuronal differentiation and survival. Plays diverse roles in the control of cell growth, survival and apoptosis via p38 MAPK signaling in muscle-specific and/or growth factor-related transcription. Plays a critical role in the regulation of neuronal apoptosis. This chain is Myocyte-specific enhancer factor 2D (Mef2d), found in Rattus norvegicus (Rat).